Reading from the N-terminus, the 332-residue chain is MGKKRINEVSTTEGAPAEKKKKVEKWLNTSSEDGEGTKKKKRPWRNKVRKLAAKKAAAERRVENSEESTILEPVATAEEATKKKKKRGPKKKKYKPEAAEVEKKNEEGDTVKENPIAEAKKRLDAGRFRMLNEKLYTCTGSEAFDFFKEDRTAFDLYHRGFADQVKKWPNHPLREIIRWLQAKPDKQAVFDLGCGEAKIAEAVGEKHTIRSFDLVAVNDRVESCDMSKLPAEDGSADVVIFCLSLMGTNLYDFIKEARRVLRTGGVLKIGEVTSRFVSIKQFCEAINKMGFETTNRRQLTDYFMMFDFRKIDKVEQKRPYGLKLKPCLYKKR.

The tract at residues 1–109 (MGKKRINEVS…EVEKKNEEGD (109 aa)) is disordered. Basic residues-rich tracts occupy residues 38–53 (KKKK…KLAA) and 82–94 (KKKK…KKKY). Positions 95–109 (KPEAAEVEKKNEEGD) are enriched in basic and acidic residues. The S-adenosyl-L-methionine site is built by His158, Gly193, Asp213, Asp225, Met226, and Cys242.

It belongs to the methyltransferase superfamily. RRP8 family.

The protein localises to the nucleus. The protein resides in the nucleolus. Functionally, probable methyltransferase required to silence rDNA. The protein is Ribosomal RNA-processing protein 8 (rrp-8) of Caenorhabditis briggsae.